We begin with the raw amino-acid sequence, 271 residues long: Putative phosphoenolpyruvate synthase regulatory protein (271 aa).

151-158 (GVSRSGKT) contacts ADP.

This sequence belongs to the pyruvate, phosphate/water dikinase regulatory protein family. PSRP subfamily.

It catalyses the reaction [pyruvate, water dikinase] + ADP = [pyruvate, water dikinase]-phosphate + AMP + H(+). The enzyme catalyses [pyruvate, water dikinase]-phosphate + phosphate + H(+) = [pyruvate, water dikinase] + diphosphate. In terms of biological role, bifunctional serine/threonine kinase and phosphorylase involved in the regulation of the phosphoenolpyruvate synthase (PEPS) by catalyzing its phosphorylation/dephosphorylation. In Burkholderia ambifaria (strain MC40-6), this protein is Putative phosphoenolpyruvate synthase regulatory protein.